The sequence spans 932 residues: Beta-mannosidase A (932 aa).

The first 19 residues, 1–19 (MRVPAQATIAVLASAVSSP), serve as a signal peptide directing secretion. Asparagine 41, asparagine 81, asparagine 94, asparagine 249, asparagine 261, asparagine 284, asparagine 289, asparagine 318, and asparagine 348 each carry an N-linked (GlcNAc...) asparagine glycan. Glutamate 480 (proton donor) is an active-site residue. Asparagine 538, asparagine 551, asparagine 609, asparagine 624, asparagine 632, asparagine 659, asparagine 739, and asparagine 791 each carry an N-linked (GlcNAc...) asparagine glycan.

This sequence belongs to the glycosyl hydrolase 2 family. Beta-mannosidase A subfamily. Homodimer.

It is found in the secreted. The enzyme catalyses Hydrolysis of terminal, non-reducing beta-D-mannose residues in beta-D-mannosides.. It participates in glycan metabolism; N-glycan degradation. In terms of biological role, exoglycosidase that cleaves the single beta-linked mannose residue from the non-reducing end of beta-mannosidic oligosaccharides of various complexity and length. Involved in the degradation of polymeric mannan and galactomannan. This is Beta-mannosidase A (mndA) from Aspergillus terreus (strain NIH 2624 / FGSC A1156).